The primary structure comprises 153 residues: Small ribosomal subunit protein bS16 (153 aa).

Positions 121 to 131 (AEAAAKAKAEA) are enriched in basic and acidic residues. The interval 121-153 (AEAAAKAKAEAEAAAAAEEAPAEEAAEEAPAED) is disordered. Residues 140–153 (APAEEAAEEAPAED) are compositionally biased toward acidic residues.

It belongs to the bacterial ribosomal protein bS16 family.

This chain is Small ribosomal subunit protein bS16, found in Bifidobacterium longum (strain DJO10A).